The sequence spans 382 residues: Succinyl-diaminopimelate desuccinylase (382 aa).

H73 contacts Zn(2+). The active site involves D75. Position 106 (D106) interacts with Zn(2+). E140 acts as the Proton acceptor in catalysis. E141, E169, and H355 together coordinate Zn(2+).

It belongs to the peptidase M20A family. DapE subfamily. As to quaternary structure, homodimer. Requires Zn(2+) as cofactor. It depends on Co(2+) as a cofactor.

The catalysed reaction is N-succinyl-(2S,6S)-2,6-diaminopimelate + H2O = (2S,6S)-2,6-diaminopimelate + succinate. The protein operates within amino-acid biosynthesis; L-lysine biosynthesis via DAP pathway; LL-2,6-diaminopimelate from (S)-tetrahydrodipicolinate (succinylase route): step 3/3. Functionally, catalyzes the hydrolysis of N-succinyl-L,L-diaminopimelic acid (SDAP), forming succinate and LL-2,6-diaminopimelate (DAP), an intermediate involved in the bacterial biosynthesis of lysine and meso-diaminopimelic acid, an essential component of bacterial cell walls. This is Succinyl-diaminopimelate desuccinylase from Leptothrix cholodnii (strain ATCC 51168 / LMG 8142 / SP-6) (Leptothrix discophora (strain SP-6)).